The chain runs to 183 residues: Ribosome rescue factor SmrB (183 aa).

The 76-residue stretch at 98–173 (LDLHGLTQLQ…GDAALLVLIE (76 aa)) folds into the Smr domain.

Belongs to the SmrB family. In terms of assembly, associates with collided ribosomes, but not with correctly translating polysomes.

Its function is as follows. Acts as a ribosome collision sensor. Detects stalled/collided disomes (pairs of ribosomes where the leading ribosome is stalled and a second ribosome has collided with it) and endonucleolytically cleaves mRNA at the 5' boundary of the stalled ribosome. Stalled/collided disomes form a new interface (primarily via the 30S subunits) that binds SmrB. Cleaved mRNA becomes available for tmRNA ligation, leading to ribosomal subunit dissociation and rescue of stalled ribosomes. The chain is Ribosome rescue factor SmrB from Escherichia coli O157:H7.